The following is a 76-amino-acid chain: Small ribosomal subunit protein bS18 (76 aa).

The protein belongs to the bacterial ribosomal protein bS18 family. Part of the 30S ribosomal subunit. Forms a tight heterodimer with protein bS6.

Binds as a heterodimer with protein bS6 to the central domain of the 16S rRNA, where it helps stabilize the platform of the 30S subunit. The sequence is that of Small ribosomal subunit protein bS18 from Oceanobacillus iheyensis (strain DSM 14371 / CIP 107618 / JCM 11309 / KCTC 3954 / HTE831).